A 149-amino-acid chain; its full sequence is Arginine repressor (149 aa).

The protein belongs to the ArgR family.

It is found in the cytoplasm. It functions in the pathway amino-acid biosynthesis; L-arginine biosynthesis [regulation]. Its function is as follows. Regulates arginine biosynthesis genes. This chain is Arginine repressor, found in Listeria innocua serovar 6a (strain ATCC BAA-680 / CLIP 11262).